Reading from the N-terminus, the 355-residue chain is MTNLDRHLSKFAYREEFAGNTEVLATAAYKEDCADASTGLTPKLPLEVEFGKMSKRPDWIKVKAPNSSEYYNTKDLIKNLKLNTVCEEAACPNIGECWSKKHATVMILGSVCTRACRFCNVKTGRPDLLDPHEPQRLAEAVQKLGLKHVVITSVDRDDLEDGGATHFAECISEIRKSSPNTTIEILTPDFLRKDGAAEIIANAKPDVFNHNVETVPSLYNTIRPGARYYNSLSLLHNIKKLSPEVFTKSGMMVGLGEEISEVVQVMDDLREAKVDFLTIGQYLQPTKNHAEVAKYVTPEEFKYLERVARTKGFLMVSASPLTRSSYHADEDFEKLKENYRHRHCEERRSIDVAIS.

The 49-residue stretch at 7 to 55 (HLSKFAYREEFAGNTEVLATAAYKEDCADASTGLTPKLPLEVEFGKMSK) folds into the RPE1 insert domain. [4Fe-4S] cluster is bound by residues Cys-86, Cys-91, Cys-97, Cys-112, Cys-116, Cys-119, and Ser-325. The Radical SAM core domain maps to 98–314 (WSKKHATVMI…ERVARTKGFL (217 aa)).

It belongs to the radical SAM superfamily. Lipoyl synthase family. Requires [4Fe-4S] cluster as cofactor.

Its subcellular location is the cytoplasm. It carries out the reaction [[Fe-S] cluster scaffold protein carrying a second [4Fe-4S](2+) cluster] + N(6)-octanoyl-L-lysyl-[protein] + 2 oxidized [2Fe-2S]-[ferredoxin] + 2 S-adenosyl-L-methionine + 4 H(+) = [[Fe-S] cluster scaffold protein] + N(6)-[(R)-dihydrolipoyl]-L-lysyl-[protein] + 4 Fe(3+) + 2 hydrogen sulfide + 2 5'-deoxyadenosine + 2 L-methionine + 2 reduced [2Fe-2S]-[ferredoxin]. It functions in the pathway protein modification; protein lipoylation via endogenous pathway; protein N(6)-(lipoyl)lysine from octanoyl-[acyl-carrier-protein]: step 2/2. Functionally, catalyzes the radical-mediated insertion of two sulfur atoms into the C-6 and C-8 positions of the octanoyl moiety bound to the lipoyl domains of lipoate-dependent enzymes, thereby converting the octanoylated domains into lipoylated derivatives. The protein is Lipoyl synthase of Rickettsia bellii (strain RML369-C).